A 789-amino-acid polypeptide reads, in one-letter code: Ent-kaur-16-ene synthase, chloroplastic (789 aa).

Aspartate 536, aspartate 540, asparagine 680, serine 684, and glutamate 688 together coordinate Mg(2+). The short motif at 536–540 (DDFYD) is the DDXXD motif element.

Belongs to the terpene synthase family. The cofactor is Mg(2+). The N-terminus is blocked. Abundant in most tissues. Present in low amounts in mature cotyledons.

The protein resides in the plastid. The protein localises to the chloroplast. It carries out the reaction ent-copalyl diphosphate = ent-kaur-16-ene + diphosphate. It functions in the pathway plant hormone biosynthesis; gibberellin biosynthesis. Functionally, catalyzes the conversion of ent-copalyl diphosphate to the gibberellin precursor ent-kaur-16-ene. In Cucurbita maxima (Pumpkin), this protein is Ent-kaur-16-ene synthase, chloroplastic.